The sequence spans 298 residues: Small ribosomal subunit biogenesis GTPase RsgA (298 aa).

The region spanning 67–228 is the CP-type G domain; it reads TNELIRPPIC…VADTPGFSSL (162 aa). GTP is bound at residue 116–119; it reads TKMD. The residue at position 166 (T166) is a Phosphothreonine. 171–179 contributes to the GTP binding site; sequence GQSGVGKSS. The Zn(2+) site is built by C252, C257, H259, and C265.

This sequence belongs to the TRAFAC class YlqF/YawG GTPase family. RsgA subfamily. In terms of assembly, monomer, but able to form dimers. Associates with 30S ribosomal subunit; a phospho-mimetic mutation increases association. Probably binds 16S rRNA. It depends on Zn(2+) as a cofactor. In terms of processing, in vitro phosphorylated mostly on Thr (with lower signal on Ser) by PrkC in the presence of poly-L-Lys or myelin basic protein, dephosphorylated by PrpC. Most in vitro phosphorylation occurs on Thr-166, in vivo phosphorylation has not been detected, but it might vary during the cell cycle.

The protein resides in the cytoplasm. In terms of biological role, one of several proteins that assist in the late maturation steps of the functional core of the 30S ribosomal subunit. Helps release RbfA from mature subunits. May play a role in the assembly of ribosomal proteins into the subunit. Circularly permuted GTPase with a low level of activity and slow catalytic turnover, does not act on ATP. GTPase activity is stimulated by the presence of 30S or 70S ribosomes, phosphorylation increases stimulation. Depletion results in increased sensitivity to protein synthesis inhibitors that block the peptide channel or peptidyl transferase center on the ribosome, suggesting this protein functions in conjunction with the ribosome in vivo. Decreasing levels of protein lead to an increase in free 30S and 50S ribosomal subunits and a decrease in assembled 70S ribosomes. Suggested to serve as a specific transcription factor for proteins involved in late stages of peptidoglycan synthesis. This chain is Small ribosomal subunit biogenesis GTPase RsgA, found in Bacillus subtilis (strain 168).